The following is a 528-amino-acid chain: Golgi resident protein GCP60 (528 aa).

A disordered region spans residues 1-71 (MAAVLNAERL…EAAAGGAAEE (71 aa)). At Ala-2 the chain carries N-acetylalanine; in Golgi resident protein GCP60, N-terminally processed. At Ser-13 the chain carries Phosphoserine. At Thr-18 the chain carries Phosphothreonine. Ser-20, Ser-43, and Ser-47 each carry phosphoserine. The span at 34 to 45 (LLPPPLPPPSPP) shows a compositional bias: pro residues. Residues 54–69 (SGEQPEPGEAAAGGAA) are compositionally biased toward low complexity. The ACB domain occupies 83 to 174 (LEELYGLALR…LNRCCHLFST (92 aa)). Positions 174–257 (TYVASHKIEK…AALNSQTAVQ (84 aa)) form a coiled coil. Residues 182–230 (EKEEQEKKRKEEEERRRREEEERERLQKEEEKRRREEEERLRREEEERR) form a disordered region. The tract at residues 182–240 (EKEEQEKKRKEEEERRRREEEERERLQKEEEKRRREEEERLRREEEERRRIEEERLRLE) is charged amino-acid region (CAR). Residues 241-308 (QQKQQIMAAL…QQQAALQKQQ (68 aa)) are q domain; Interaction with PI4KB, TBC1D22A and TBC1D22B. Positions 335 to 362 (NGQAKTHTDSSEKELEPEAAEEALENGP) are disordered. A compositionally biased stretch (basic and acidic residues) spans 340–350 (THTDSSEKELE). The region spanning 384–526 (KEKIQQDADS…SKSVYYRVYY (143 aa)) is the GOLD domain. The tract at residues 514–516 (LWR) is membrane-binding.

As to quaternary structure, homodimer. Interacts with the C-terminal cytoplasmic domain of giantin/GOLGB1. Interacts with PBR and PKA regulatory subunit RI-alpha. Does not interact with PKA regulatory subunit RI-beta nor PKA regulatory subunit RII-alpha. Interacts (via Q domain) with PI4KB (via N-terminus). Interacts (via Q domain) with TBC1D22A and TBC1D22B; interactions with PI4KB and with TBC1D22A and TBC1D22B are mutually exclusive. Interacts with C10ORF76 and RAB11B. In terms of assembly, (Microbial infection) Interacts (via GOLD domain) with 3A proteins from various picornaviruses, including poliovirus, enterovirus A71, enterovirus D68, hepatitis A virus, human parechovirus 1, poliovirus, Human rhinovirus-14 (Hrv-14), coysackievirus B2, coysackievirus B3, coysackievirus B5, Aichi virus and human klassevirus. Interacts (via GOLD domain) with Aichi virus protein 3A; this interaction allows the formation of a 3A/ACBD3/PI4KB complex in order to synthesize PI4P at the viral RNA replication sites. Interacts with Aichi virus protein 2B. Interacts with Aichi virus protein 2C. As to expression, ubiquitous, with highest expression in testis and ovary.

It localises to the golgi apparatus membrane. The protein resides in the mitochondrion. Its function is as follows. Involved in the maintenance of Golgi structure by interacting with giantin, affecting protein transport between the endoplasmic reticulum and Golgi. Involved in hormone-induced steroid biosynthesis in testicular Leydig cells. Recruits PI4KB to the Golgi apparatus membrane; enhances the enzyme activity of PI4KB activity via its membrane recruitment thereby increasing the local concentration of the substrate in the vicinity of the kinase. In terms of biological role, (Microbial infection) Plays an essential role in Aichi virus RNA replication by recruiting PI4KB at the viral replication sites. This chain is Golgi resident protein GCP60 (ACBD3), found in Homo sapiens (Human).